A 577-amino-acid chain; its full sequence is Vacuolar membrane amino acid uptake transporter fnx2 (577 aa).

Positions 1–14 (MSNPRTKSPNTNRG) are enriched in polar residues. The disordered stretch occupies residues 1–80 (MSNPRTKSPN…SPHRQDAATT (80 aa)). The span at 22–39 (SALLNDSLSSLNGNSSYD) shows a compositional bias: low complexity. Over residues 40 to 62 (SIKDSSKNNKDVAEVNEYPRRPE) the composition is skewed to basic and acidic residues. Helical transmembrane passes span 91–111 (VLPA…IVAS), 123–145 (FSQV…PLFG), 157–177 (LLAA…SRSL), 186–206 (IAGI…SDIV), 217–237 (IINV…GYFA), 244–264 (IGFL…YFTL), 286–306 (LILL…GGNV), 317–337 (LLIA…FVAF), 356–376 (LCNF…PLFF), 391–411 (LIPM…VISL), 418–438 (ITVG…RYGY), 448–468 (YPFS…VAII), 490–510 (GCVL…GIKL), and 547–567 (LLGS…CAFV).

The protein belongs to the major facilitator superfamily.

Its subcellular location is the vacuole. It is found in the membrane. Functionally, MFS-type transporter involved in vacuolar amino acid uptake. The sequence is that of Vacuolar membrane amino acid uptake transporter fnx2 (fnx2) from Schizosaccharomyces pombe (strain 972 / ATCC 24843) (Fission yeast).